The sequence spans 501 residues: Aldehyde dehydrogenase, cytosolic 1 (501 aa).

An NAD(+)-binding site is contributed by 246 to 251 (GSTEVG). The active-site Proton acceptor is Glu-269. Cys-303 (nucleophile) is an active-site residue.

The protein belongs to the aldehyde dehydrogenase family. As to quaternary structure, homotetramer. In terms of tissue distribution, eye specific, with very high expression in the lens.

It is found in the cytoplasm. It carries out the reaction an aldehyde + NAD(+) + H2O = a carboxylate + NADH + 2 H(+). It participates in alcohol metabolism; ethanol degradation; acetate from ethanol: step 2/2. In terms of biological role, major component of the eye of elephant shrews, which in contrast to other mammals, possesses both a lens- and a non-lens class-1 aldehyde dehydrogenase 1. This eye-specific form is a structural protein of the lens and, in other part of the eye, serves as the major form of ALDH1. Can convert/oxidize retinaldehyde to retinoic acid. This Elephantulus edwardii (Cape long-eared elephant shrew) protein is Aldehyde dehydrogenase, cytosolic 1 (ALDH1).